Consider the following 102-residue polypeptide: Protamine-2 (102 aa).

2 disordered regions span residues 1-40 (MVRY…SPEH) and 67-102 (HRQQ…CRRH). Phosphoserine occurs at positions 8, 10, and 37.

Belongs to the protamine P2 family. As to quaternary structure, interacts with TDRP. In terms of processing, proteolytic processing into mature chains is required for histone eviction during spermatogenesis. Transition proteins (TNP1 and TNP2) are required for processing. As to expression, testis.

It is found in the nucleus. The protein resides in the chromosome. Protamines substitute for histones in the chromatin of sperm during the haploid phase of spermatogenesis. They compact sperm DNA into a highly condensed, stable and inactive complex. The sequence is that of Protamine-2 (PRM2) from Pan troglodytes (Chimpanzee).